The sequence spans 416 residues: Adenylosuccinate synthetase (416 aa).

Residues 12 to 18 (GDEGKGK) and 40 to 42 (GHT) contribute to the GTP site. Aspartate 13 functions as the Proton acceptor in the catalytic mechanism. 2 residues coordinate Mg(2+): aspartate 13 and glycine 40. Residues 13 to 16 (DEGK), 38 to 41 (NAGH), threonine 125, arginine 139, glutamine 219, threonine 234, and arginine 298 each bind IMP. Histidine 41 functions as the Proton donor in the catalytic mechanism. 294–300 (TVTGRKR) is a binding site for substrate. Residues arginine 300, 326-328 (KLD), and 404-406 (STS) each bind GTP.

The protein belongs to the adenylosuccinate synthetase family. Homodimer. The cofactor is Mg(2+).

Its subcellular location is the cytoplasm. The catalysed reaction is IMP + L-aspartate + GTP = N(6)-(1,2-dicarboxyethyl)-AMP + GDP + phosphate + 2 H(+). It participates in purine metabolism; AMP biosynthesis via de novo pathway; AMP from IMP: step 1/2. In terms of biological role, plays an important role in the de novo pathway of purine nucleotide biosynthesis. Catalyzes the first committed step in the biosynthesis of AMP from IMP. The chain is Adenylosuccinate synthetase from Aliarcobacter butzleri (strain RM4018) (Arcobacter butzleri).